The primary structure comprises 108 residues: Replication restart protein PriB (108 aa).

The region spanning 8–108 is the SSB domain; that stretch reads IDNRFSVMGV…LHAEQIEFID (101 aa).

Belongs to the PriB family. In terms of assembly, homodimer. Interacts with PriA and DnaT. Component of the replication restart primosome. Primosome assembly occurs via a 'hand-off' mechanism. PriA binds to replication forks, subsequently PriB then DnaT bind; DnaT then displaces ssDNA to generate the helicase loading substrate.

In terms of biological role, involved in the restart of stalled replication forks, which reloads the replicative helicase on sites other than the origin of replication; the PriA-PriB pathway is the major replication restart pathway. During primosome assembly it facilitates complex formation between PriA and DnaT on DNA; stabilizes PriA on DNA. Stimulates the DNA unwinding activity of PriA helicase. In Haemophilus influenzae (strain 86-028NP), this protein is Replication restart protein PriB.